A 216-amino-acid chain; its full sequence is Glycerol-3-phosphate acyltransferase (216 aa).

5 helical membrane-spanning segments follow: residues 4-24 (IALG…AILV), 56-76 (VAVL…AYLL), 80-100 (PLYL…PVFF), 112-132 (FGAI…TWLL), and 138-158 (GYSS…VWWF).

Belongs to the PlsY family. Probably interacts with PlsX.

It localises to the cell inner membrane. The catalysed reaction is an acyl phosphate + sn-glycerol 3-phosphate = a 1-acyl-sn-glycero-3-phosphate + phosphate. It participates in lipid metabolism; phospholipid metabolism. Its function is as follows. Catalyzes the transfer of an acyl group from acyl-phosphate (acyl-PO(4)) to glycerol-3-phosphate (G3P) to form lysophosphatidic acid (LPA). This enzyme utilizes acyl-phosphate as fatty acyl donor, but not acyl-CoA or acyl-ACP. This chain is Glycerol-3-phosphate acyltransferase, found in Yersinia pseudotuberculosis serotype O:1b (strain IP 31758).